Reading from the N-terminus, the 263-residue chain is ATP synthase subunit b 2 (263 aa).

A helical transmembrane segment spans residues 2-22 (LIDPLTVVAQIINFLILVALL).

This sequence belongs to the ATPase B chain family. As to quaternary structure, F-type ATPases have 2 components, F(1) - the catalytic core - and F(0) - the membrane proton channel. F(1) has five subunits: alpha(3), beta(3), gamma(1), delta(1), epsilon(1). F(0) has four main subunits: a(1), b(1), b'(1) and c(10-14). The alpha and beta chains form an alternating ring which encloses part of the gamma chain. F(1) is attached to F(0) by a central stalk formed by the gamma and epsilon chains, while a peripheral stalk is formed by the delta, b and b' chains.

The protein localises to the cellular thylakoid membrane. Its function is as follows. F(1)F(0) ATP synthase produces ATP from ADP in the presence of a proton or sodium gradient. F-type ATPases consist of two structural domains, F(1) containing the extramembraneous catalytic core and F(0) containing the membrane proton channel, linked together by a central stalk and a peripheral stalk. During catalysis, ATP synthesis in the catalytic domain of F(1) is coupled via a rotary mechanism of the central stalk subunits to proton translocation. Functionally, component of the F(0) channel, it forms part of the peripheral stalk, linking F(1) to F(0). The polypeptide is ATP synthase subunit b 2 (Acaryochloris marina (strain MBIC 11017)).